A 2407-amino-acid polypeptide reads, in one-letter code: Daf-12-interacting protein 1 (2407 aa).

Residues 90–112 (QNSSMASMSSTPSSGQSSSPRNA) are compositionally biased toward low complexity. The tract at residues 90-152 (QNSSMASMSS…PHLSVQSQQR (63 aa)) is disordered. The 59-residue stretch at 277–335 (CSVHVPHLDRHSPDHYRRRFESYGQVIDVDMVKSNDNKAFAVVQFTNIDDAQKALQDTN) folds into the RRM domain. Disordered stretches follow at residues 439–632 (EVAA…LELD), 737–767 (ATDS…TNRL), 785–849 (LCIG…GRPA), 874–896 (PTHD…ETMV), 921–986 (LIAA…PSNA), 993–1012 (RSQS…TPVV), 1025–1844 (SNQP…EDSE), 1858–1918 (IAQE…VNNH), 1932–1976 (LQPA…QQSD), 2077–2103 (EENE…LAAA), and 2172–2200 (SIQR…VNQN). Residues 443–456 (RSSSPTSKSENDQG) are compositionally biased toward polar residues. Residues 512–529 (EDSDEQNDVDEEDDEDVV) are compositionally biased toward acidic residues. 3 stretches are compositionally biased toward basic and acidic residues: residues 530–541 (SEEKRHEPEEGK), 548–564 (GHRD…DSSE), and 573–586 (SHHE…KDSE). Residues 587 to 603 (AYQSRSFSPLNYQSQSP) are compositionally biased toward polar residues. The segment covering 618–627 (SPTTSSASSS) has biased composition (low complexity). Polar residues-rich tracts occupy residues 791-826 (TPST…TPRS) and 837-849 (SRHN…GRPA). Polar residues predominate over residues 924–946 (ATSTGTHSVSSSAHSTPRHSISG). Residues 966 to 978 (SRPEKVQIRHDTI) are compositionally biased toward basic and acidic residues. Residues 1043–1052 (SALQNIQNHQ) are compositionally biased toward polar residues. Positions 1053–1070 (PPHSNANSTPSTPSTSTH) are enriched in low complexity. Residues 1086 to 1153 (KEKEEREREA…KVRKKAEKEK (68 aa)) are compositionally biased toward basic and acidic residues. The segment covering 1165–1177 (SDESDSDSNDELD) has biased composition (acidic residues). Composition is skewed to basic and acidic residues over residues 1178-1195 (LDVR…KDHQ), 1218-1227 (RAHDSFEKMQ), 1279-1293 (ADQR…EKGE), 1304-1320 (NDAG…DREN), 1335-1355 (QGER…DAAA), and 1376-1398 (RRSS…PHED). Composition is skewed to low complexity over residues 1456–1471 (PKHL…TKRS) and 1488–1498 (TTSSTSTATTS). The segment covering 1534–1547 (SMNSAADSPMSTTG) has biased composition (polar residues). The segment covering 1570-1595 (SSSGQHDSSSGSSSDSSSSDGSTSSD) has biased composition (low complexity). 2 stretches are compositionally biased toward basic and acidic residues: residues 1679 to 1691 (SEEH…HGDS) and 1703 to 1726 (EHQE…HEEQ). The span at 1749–1770 (TQAQEKSAHTLISDQETDQAVQ) shows a compositional bias: polar residues. Residues 1792-1805 (NEKEVSGKDPHNIK) are compositionally biased toward basic and acidic residues. Residues 1809–1826 (PLNNGHTDLLFSPSSSAH) are compositionally biased toward polar residues. Basic and acidic residues-rich tracts occupy residues 1827–1836 (ASEKQSTKSE) and 1873–1892 (EEVK…KMEE). Composition is skewed to polar residues over residues 1895 to 1911 (EQTP…SQDT) and 1932 to 1942 (LQPASQHQVAQ). Residues 1962 to 1975 (SQQSQPSPMSSQQS) show a composition bias toward low complexity. Residues 2049-2110 (NQMMQAKMKQ…AAATAAATMA (62 aa)) are a coiled coil. Positions 2077 to 2099 (EENERKVEEDRREKQRKEEERQR) are enriched in basic and acidic residues. Residues 2176–2186 (PSSTASTSSNP) are compositionally biased toward low complexity. The SPOC domain maps to 2213–2383 (QRWFYKHFPM…TRYLLIVFTN (171 aa)).

In terms of assembly, isoform d interacts with daf-12. In terms of tissue distribution, isoform d is widely expressed: detected in the hypodermis, seam cells, intestine, somatic gonad, neurons, vulval precursors, body wall muscle and pharynx.

The protein resides in the nucleus. Functionally, probable transcriptional corepressor which modulates activity of the nuclear hormone receptor daf-12 to regulate the dauer diapause. The protein is Daf-12-interacting protein 1 of Caenorhabditis elegans.